A 354-amino-acid polypeptide reads, in one-letter code: Clavesin-1 (354 aa).

Positions 118–279 (IKRALIDGFP…EFGGTLPPYD (162 aa)) constitute a CRAL-TRIO domain. Residues 317-354 (RECSPKPMKRSQSVVEAGTLKHEEKGENENTQPLLALD) form a disordered region. A compositionally biased stretch (basic and acidic residues) spans 335–344 (TLKHEEKGEN). A compositionally biased stretch (polar residues) spans 345-354 (ENTQPLLALD).

As to quaternary structure, forms a complex with clathrin heavy chain and gamma-adaptin.

Its subcellular location is the golgi apparatus. The protein localises to the trans-Golgi network membrane. The protein resides in the early endosome membrane. It is found in the cytoplasmic vesicle. It localises to the clathrin-coated vesicle. Its function is as follows. Required for normal morphology of late endosomes and/or lysosomes in neurons. Binds phosphatidylinositol 3,5-bisphosphate (PtdIns(3,5)P2). The protein is Clavesin-1 (Clvs1) of Mus musculus (Mouse).